The sequence spans 439 residues: tRNA modification GTPase MnmE (439 aa).

(6S)-5-formyl-5,6,7,8-tetrahydrofolate contacts are provided by Arg-20, Glu-78, and Lys-116. A TrmE-type G domain is found at 211–364 (GIYVAILGEP…LLSAIQKKVE (154 aa)). GTP contacts are provided by residues 221–226 (NSGKST), 240–246 (SEYAGTT), and 265–268 (DTAG). Mg(2+) is bound by residues Ser-225 and Thr-246. Residue Lys-439 coordinates (6S)-5-formyl-5,6,7,8-tetrahydrofolate.

The protein belongs to the TRAFAC class TrmE-Era-EngA-EngB-Septin-like GTPase superfamily. TrmE GTPase family. As to quaternary structure, homodimer. Heterotetramer of two MnmE and two MnmG subunits. K(+) serves as cofactor.

Its subcellular location is the cytoplasm. In terms of biological role, exhibits a very high intrinsic GTPase hydrolysis rate. Involved in the addition of a carboxymethylaminomethyl (cmnm) group at the wobble position (U34) of certain tRNAs, forming tRNA-cmnm(5)s(2)U34. This chain is tRNA modification GTPase MnmE, found in Ehrlichia ruminantium (strain Welgevonden).